Consider the following 521-residue polypeptide: GMP synthase [glutamine-hydrolyzing] (521 aa).

One can recognise a Glutamine amidotransferase type-1 domain in the interval 5–197; that stretch reads KILILDFGSQ…VLDICGAQPG (193 aa). The Nucleophile role is filled by Cys-81. Active-site residues include His-171 and Glu-173. A GMPS ATP-PPase domain is found at 198–390; sequence WTMPNYIEEA…LGLPREMVYR (193 aa). Residue 225–231 participates in ATP binding; that stretch reads SGGVDSS.

As to quaternary structure, homodimer.

It catalyses the reaction XMP + L-glutamine + ATP + H2O = GMP + L-glutamate + AMP + diphosphate + 2 H(+). It functions in the pathway purine metabolism; GMP biosynthesis; GMP from XMP (L-Gln route): step 1/1. Catalyzes the synthesis of GMP from XMP. This chain is GMP synthase [glutamine-hydrolyzing] (guaA), found in Neisseria meningitidis serogroup B (strain ATCC BAA-335 / MC58).